A 212-amino-acid polypeptide reads, in one-letter code: uncharacterized protein (212 aa).

S-adenosyl-L-methionine-binding residues include Gly-53, Glu-74, and Asp-97.

This sequence belongs to the methyltransferase superfamily. YrrT family.

In terms of biological role, could be a S-adenosyl-L-methionine-dependent methyltransferase. This is an uncharacterized protein from Bacillus cytotoxicus (strain DSM 22905 / CIP 110041 / 391-98 / NVH 391-98).